Consider the following 109-residue polypeptide: U4-lycotoxin-Ls1a (109 aa).

Positions 1–22 (MKVLVLFSVLFLTLFSYSSTEA) are cleaved as a signal peptide. Residues 23 to 44 (IDEFDSDAEEDMLSLMANEQVR) constitute a propeptide that is removed on maturation. Residues 45–88 (AKACTPRLHDCSHDRHSCCRGELFKDVCYCFYPEGEDKTEVCSC) form a knottin domain region. Cystine bridges form between C48-C63, C55-C72, C62-C88, and C74-C86. Residues 89–108 (QQPKSHKYIEKVVDKAKTVV) are linear cationic cytotoxin domain.

This sequence belongs to the neurotoxin 19 (CSTX) family. 05 (U4-Lctx) subfamily. Expressed by the venom gland.

Its subcellular location is the secreted. Its function is as follows. Enhances the high-affinity desensitization of human P2RX3 purinoceptors. The sequence is that of U4-lycotoxin-Ls1a from Lycosa singoriensis (Wolf spider).